Reading from the N-terminus, the 526-residue chain is Probable feruloyl esterase B (526 aa).

The N-terminal stretch at 1–18 (MARLSLLTLLALGSAALA) is a signal peptide. Cystine bridges form between C27/C74 and C62/C113. A glycan (N-linked (GlcNAc...) asparagine) is linked at N137. Cystine bridges form between C186-C441, C255-C272, C281-C291, and C503-C525. The active-site Acyl-ester intermediate is the S187. Residue N233 is glycosylated (N-linked (GlcNAc...) asparagine). Ca(2+) contacts are provided by D256, D259, A261, D263, and I265. N311 is a glycosylation site (N-linked (GlcNAc...) asparagine). Active-site charge relay system residues include D400 and H440. An N-linked (GlcNAc...) asparagine glycan is attached at N516.

The protein belongs to the tannase family.

It localises to the secreted. It carries out the reaction feruloyl-polysaccharide + H2O = ferulate + polysaccharide.. Functionally, involved in degradation of plant cell walls. Hydrolyzes the feruloyl-arabinose ester bond in arabinoxylans as well as the feruloyl-galactose and feruloyl-arabinose ester bonds in pectin. In Aspergillus clavatus (strain ATCC 1007 / CBS 513.65 / DSM 816 / NCTC 3887 / NRRL 1 / QM 1276 / 107), this protein is Probable feruloyl esterase B (faeB).